Here is a 333-residue protein sequence, read N- to C-terminus: Ketol-acid reductoisomerase (NADP(+)) (333 aa).

The 179-residue stretch at M1–T179 folds into the KARI N-terminal Rossmann domain. NADP(+) contacts are provided by residues Y22 to Q25, K45, S48, S50, and D80 to Q83. The active site involves H105. G131 serves as a coordination point for NADP(+). The KARI C-terminal knotted domain maps to T180–V325. Mg(2+)-binding residues include D188, E192, E224, and E228. Substrate is bound at residue S249.

The protein belongs to the ketol-acid reductoisomerase family. The cofactor is Mg(2+).

It catalyses the reaction (2R)-2,3-dihydroxy-3-methylbutanoate + NADP(+) = (2S)-2-acetolactate + NADPH + H(+). It carries out the reaction (2R,3R)-2,3-dihydroxy-3-methylpentanoate + NADP(+) = (S)-2-ethyl-2-hydroxy-3-oxobutanoate + NADPH + H(+). Its pathway is amino-acid biosynthesis; L-isoleucine biosynthesis; L-isoleucine from 2-oxobutanoate: step 2/4. The protein operates within amino-acid biosynthesis; L-valine biosynthesis; L-valine from pyruvate: step 2/4. Involved in the biosynthesis of branched-chain amino acids (BCAA). Catalyzes an alkyl-migration followed by a ketol-acid reduction of (S)-2-acetolactate (S2AL) to yield (R)-2,3-dihydroxy-isovalerate. In the isomerase reaction, S2AL is rearranged via a Mg-dependent methyl migration to produce 3-hydroxy-3-methyl-2-ketobutyrate (HMKB). In the reductase reaction, this 2-ketoacid undergoes a metal-dependent reduction by NADPH to yield (R)-2,3-dihydroxy-isovalerate. The protein is Ketol-acid reductoisomerase (NADP(+)) of Mycobacterium bovis (strain ATCC BAA-935 / AF2122/97).